The primary structure comprises 237 residues: uncharacterized protein (237 aa).

Residues 1-27 (MKSFLRKPKFWLLLLGGLSTSSIILSA) form the signal peptide. A lipid anchor (N-palmitoyl cysteine) is attached at cysteine 28. The S-diacylglycerol cysteine moiety is linked to residue cysteine 28.

It belongs to the MG307/MG309/MG338 family.

The protein localises to the membrane. This is an uncharacterized protein from Mycoplasma pneumoniae (strain ATCC 29342 / M129 / Subtype 1) (Mycoplasmoides pneumoniae).